Here is a 586-residue protein sequence, read N- to C-terminus: Asparagine synthetase [glutamine-hydrolyzing] 2 (586 aa).

Cys-2 (for GATase activity) is an active-site residue. The region spanning 2-185 (CGILAVLGCS…PGHLYSSKEK (184 aa)) is the Glutamine amidotransferase type-2 domain. L-glutamine contacts are provided by residues 50-54 (RLAIV), 75-77 (NGE), and Asp-98. Residues 193 to 516 (PPWFSEAIPS…PQNSARLSVP (324 aa)) enclose the Asparagine synthetase domain. ATP is bound by residues Leu-231, Val-267, and 341–342 (SG).

It catalyses the reaction L-aspartate + L-glutamine + ATP + H2O = L-asparagine + L-glutamate + AMP + diphosphate + H(+). It participates in amino-acid biosynthesis; L-asparagine biosynthesis; L-asparagine from L-aspartate (L-Gln route): step 1/1. The protein is Asparagine synthetase [glutamine-hydrolyzing] 2 (AS2) of Lotus japonicus (Lotus corniculatus var. japonicus).